The chain runs to 167 residues: V-type proton ATPase subunit c' (167 aa).

Topologically, residues 1–13 (MAEIMADSELAPK) are lumenal. A helical membrane pass occupies residues 14 to 34 (FAPFIGMAGIAAAMIFGSAGA). The Cytoplasmic segment spans residues 35-59 (AYGTAKSGIGIAGVGTFRPDLIMKC). The helical transmembrane segment at 60–80 (LIPVVMSGIIAVYALVVAVLI) threads the bilayer. Over 81–101 (AQDLGPPGSGQHYSLFNGFMH) the chain is Lumenal. Residues 102–122 (LACGLSVGLTGLAAGYCIGIV) traverse the membrane as a helical segment. Topologically, residues 123 to 140 (GDKGVRSFMLQSRIFVGM) are cytoplasmic. A helical transmembrane segment spans residues 141 to 161 (VLILIFGEVLGLYGLIVALIL). The Lumenal segment spans residues 162–167 (NTKSKG).

This sequence belongs to the V-ATPase proteolipid subunit family. As to quaternary structure, V-ATPase is a heteromultimeric enzyme composed of a peripheral catalytic V1 complex (components A to H) attached to an integral membrane V0 proton pore complex (components: a, c, c', c'', d, e, f and VOA1). The decameric c-ring forms the proton-conducting pore, and is composed of eight proteolipid subunits c, one subunit c' and one subunit c''.

It is found in the vacuole membrane. Proton-conducting pore forming subunit of the V0 complex of vacuolar(H+)-ATPase (V-ATPase), a multisubunit enzyme composed of a peripheral complex (V1) that hydrolyzes ATP and a membrane integral complex (V0) that translocates protons. V-ATPase is responsible for acidifying and maintaining the pH of intracellular compartments. The chain is V-type proton ATPase subunit c' (vma-11) from Neurospora crassa (strain ATCC 24698 / 74-OR23-1A / CBS 708.71 / DSM 1257 / FGSC 987).